We begin with the raw amino-acid sequence, 431 residues long: Glutamyl-tRNA(Gln) amidotransferase subunit A (431 aa).

Active-site charge relay system residues include Lys55 and Ser130. Ser154 acts as the Acyl-ester intermediate in catalysis.

This sequence belongs to the amidase family. GatA subfamily. Heterotrimer of A, B and C subunits.

It catalyses the reaction L-glutamyl-tRNA(Gln) + L-glutamine + ATP + H2O = L-glutaminyl-tRNA(Gln) + L-glutamate + ADP + phosphate + H(+). Its function is as follows. Allows the formation of correctly charged Gln-tRNA(Gln) through the transamidation of misacylated Glu-tRNA(Gln) in organisms which lack glutaminyl-tRNA synthetase. The reaction takes place in the presence of glutamine and ATP through an activated gamma-phospho-Glu-tRNA(Gln). This is Glutamyl-tRNA(Gln) amidotransferase subunit A from Methanococcus vannielii (strain ATCC 35089 / DSM 1224 / JCM 13029 / OCM 148 / SB).